The chain runs to 176 residues: Calcineurin subunit B type 2 (176 aa).

A lipid anchor (N-myristoyl glycine) is attached at Gly2. 4 EF-hand domains span residues 18-53 (DEIKRLGRSFKKMDLDKSGSLSVDEFMSLPELQQNP), 57-85 (RVIDIFDTDGNGEVDFREFIVGTSQFSVK), 87-122 (DEEQKLRFAFRIYDMDNDGFISNGELFQVLKMMVGN), and 128-163 (QLQQLVDKSILVLDKDGDGRISFEEFRDVVRTMEIH). Ca(2+)-binding residues include Asp31, Asp33, Ser35, Ser37, Glu42, Asp63, Asp65, Asn67, Glu69, Glu74, Asp100, Asp102, Asp104, and Glu111. The interval 131 to 136 (QLVDKS) is calcineurin A binding. Ca(2+)-binding residues include Asp141, Asp143, Asp145, Arg147, and Glu152.

The protein belongs to the calcineurin regulatory subunit family. In terms of assembly, forms a complex composed of a calmodulin-dependent catalytic subunit (also known as calcineurin A) and a regulatory Ca(2+)-binding subunit (also known as calcineurin B). There are three catalytic subunits, each encoded by a separate gene (PPP3CA, PPP3CB, and PPP3CC) and two regulatory subunits which are also encoded by separate genes (PPP3R1 and PPP3R2). Interacts with SPATA33 (via PQIIIT motif). Testis specific.

The protein resides in the mitochondrion. Regulatory subunit of calcineurin, a calcium-dependent, calmodulin stimulated protein phosphatase. Confers calcium sensitivity. The protein is Calcineurin subunit B type 2 (Ppp3r2) of Rattus norvegicus (Rat).